Reading from the N-terminus, the 410-residue chain is Probable tRNA sulfurtransferase (410 aa).

Residues alanine 58–arginine 167 enclose the THUMP domain. ATP-binding positions include leucine 185–leucine 186, histidine 210–phenylalanine 211, arginine 267, glycine 289, and glutamine 298.

Belongs to the ThiI family.

It localises to the cytoplasm. The enzyme catalyses [ThiI sulfur-carrier protein]-S-sulfanyl-L-cysteine + a uridine in tRNA + 2 reduced [2Fe-2S]-[ferredoxin] + ATP + H(+) = [ThiI sulfur-carrier protein]-L-cysteine + a 4-thiouridine in tRNA + 2 oxidized [2Fe-2S]-[ferredoxin] + AMP + diphosphate. It carries out the reaction [ThiS sulfur-carrier protein]-C-terminal Gly-Gly-AMP + S-sulfanyl-L-cysteinyl-[cysteine desulfurase] + AH2 = [ThiS sulfur-carrier protein]-C-terminal-Gly-aminoethanethioate + L-cysteinyl-[cysteine desulfurase] + A + AMP + 2 H(+). The protein operates within cofactor biosynthesis; thiamine diphosphate biosynthesis. Catalyzes the ATP-dependent transfer of a sulfur to tRNA to produce 4-thiouridine in position 8 of tRNAs, which functions as a near-UV photosensor. Also catalyzes the transfer of sulfur to the sulfur carrier protein ThiS, forming ThiS-thiocarboxylate. This is a step in the synthesis of thiazole, in the thiamine biosynthesis pathway. The sulfur is donated as persulfide by IscS. The chain is Probable tRNA sulfurtransferase from Nocardia farcinica (strain IFM 10152).